The following is a 147-amino-acid chain: Adenylylsulfatase HINT1 (147 aa).

An HIT domain is found at 37–147; it reads IFDKIISKEI…GGRQMNWPPG (111 aa). The short motif at 131 to 135 is the Histidine triad motif element; it reads HIHVH. The active-site Tele-AMP-histidine intermediate is the histidine 133. Histidine 135 provides a ligand contact to substrate.

The protein resides in the peroxisome. It is found in the plastid. The protein localises to the chloroplast. It catalyses the reaction adenosine 5'-phosphosulfate + H2O = sulfate + AMP + 2 H(+). Functionally, possesses adenylylsulfatase activity in vitro. The chain is Adenylylsulfatase HINT1 from Arabidopsis thaliana (Mouse-ear cress).